The chain runs to 153 residues: Endoribonuclease YbeY (153 aa).

Zn(2+) contacts are provided by His-118, His-122, and His-128.

This sequence belongs to the endoribonuclease YbeY family. Requires Zn(2+) as cofactor.

Its subcellular location is the cytoplasm. Functionally, single strand-specific metallo-endoribonuclease involved in late-stage 70S ribosome quality control and in maturation of the 3' terminus of the 16S rRNA. The sequence is that of Endoribonuclease YbeY from Staphylococcus carnosus (strain TM300).